The primary structure comprises 420 residues: UDP-N-acetyl-D-mannosamine dehydrogenase (420 aa).

Residues Tyr13, Ile14, Asp33, Thr85, and Thr126 each coordinate NAD(+). UDP-N-acetyl-alpha-D-mannosaminouronate-binding residues include Arg160, Val161, Lys212, Asn216, Arg219, His250, Arg252, and Gly263. The Proton donor/acceptor role is filled by Lys212. The active-site Nucleophile is the Cys266. UDP-N-acetyl-alpha-D-mannosaminouronate-binding residues include Phe330 and Lys331. Arg338 serves as a coordination point for NAD(+). Lys416 is a UDP-N-acetyl-alpha-D-mannosaminouronate binding site.

Belongs to the UDP-glucose/GDP-mannose dehydrogenase family. WecC subfamily. In terms of assembly, homodimer.

It catalyses the reaction UDP-N-acetyl-alpha-D-mannosamine + 2 NAD(+) + H2O = UDP-N-acetyl-alpha-D-mannosaminouronate + 2 NADH + 3 H(+). It functions in the pathway bacterial outer membrane biogenesis; enterobacterial common antigen biosynthesis. Functionally, catalyzes the four-electron oxidation of UDP-N-acetyl-D-mannosamine (UDP-ManNAc), reducing NAD(+) and releasing UDP-N-acetylmannosaminuronic acid (UDP-ManNAcA). In Shigella flexneri, this protein is UDP-N-acetyl-D-mannosamine dehydrogenase.